The chain runs to 457 residues: MALSSQAQGKLFVRDSRTSREYEIPISNNTINAADFQKINLPTKGKSLTKALGLQLYDPGMQNTAIKKTEIIGRDPSTGLPLLRGVTSQELWKRRCDFEELFSLMVFGNYPTIVEREALRYQFAEYMKEVPKVVGSVIRKFPPSSPPLPMITAGLSAYLSSDPDFIPAIHGGNIYHRNPRAADEAAIKTAAVYAVVIGLISCHKKGINFVPADTDDTFLENLFRMCGLVDPATRRPDPHVLAVFRKGLVLNCDNGMTQSNLVLCATASSLCDPISCLISAISAAYGPLHYGAQEAGYRTLSEIGSADRVPHFLEQVKRRERRLFGYGHRTFATEDPRLNAVKGWLQELDFDSKREPLMKIAEEIDRLAAQDDYFTSRGLRANADFYTLFVFRAYGFDWDMIGAANFCMRIIGFMAHWREAMEQEIKIFRARDYYVGPSKKDPNRESSGTGILAQARL.

Residues His-328 and Asp-384 contribute to the active site.

This sequence belongs to the citrate synthase family.

The enzyme catalyses (2E,10E)-dode-2,10-dicenoyl-CoA + oxaloacetate + H2O = (4E,11E)-2-hydroxytrideca-4,11-dien-1,2,3-tricarboxylate + CoA + H(+). It functions in the pathway secondary metabolite biosynthesis. Its function is as follows. Alkylcitrate synthase; part of the gene cluster that mediates the biosynthesis of the antihypercholesterolemic agents phomoidrides which are dimeric anhydrides. Within the pathway, the alkylcitrate synthase (ACS) phiJ and the alkylcitrate dehydratase (ACDH) phiI produce the decarboxylated monomeric anhydrides by coupling the C12-fatty acyl product from phiA with oxalacetic acid. The pathway begins with the highly reducing polyketide synthase phiA that catalyzes the formation of a C12-fatty acyl-ACP, starting from one acetate and 5 malonate units. The hydrolase phiM is involved in the release of the C12-fatty acyl chain from phiA. The alkylcitrate synthase (ACS) phiJ and the alkylcitrate dehydratase (ACDH) phiI then give rise to decarboxylated monomeric anhydrides by coupling the C12-fatty acyl chain with oxalacetic acid. The cyclase phiC is responsible for the dimerization of the monomeric anhydrides which leads to the production of prephomoidride that contains the characteristic bicyclo[4.3.1]deca-1,6-diene system of phomoidrides. Iterative oxidation catalyzed by the alpha-ketoglutarate-dependent dioxygenase phiK produced then phomoidride A. Finally, the methyltransferase phiE converts phomoidride A to phomoidride B via an acetalization reaction. The phosphatidylethanolamine-binding protein phiB and phiN are not essential for dimerization and their functions have still to be determined. The chain is Alkylcitrate synthase phiJ from Fungal sp. (strain ATCC 74256).